Reading from the N-terminus, the 145-residue chain is Toxin Res (145 aa).

Belongs to the MbcT/ParT/Res family. In terms of assembly, homodimer. Forms a complex with cognate antitoxin Xre; the 2 toxin molecules dimerize and each contacts an Xre homodimer. Most Res-Xre contacts are between the antitoxin molecule closest to the toxin.

Functionally, toxic component of a type II toxin-antitoxin (TA) system. Expression in E.coli inhibits cell growth. In vivo it is probably neutralized by cognate antitoxin Xre; this has not been shown upon expression in E.coli. Probably depletes intracellular NAD(+). This Pseudomonas putida (strain ATCC 47054 / DSM 6125 / CFBP 8728 / NCIMB 11950 / KT2440) protein is Toxin Res.